Here is an 88-residue protein sequence, read N- to C-terminus: Small ribosomal subunit protein bS20 (88 aa).

The interval methionine 1–arginine 20 is disordered.

This sequence belongs to the bacterial ribosomal protein bS20 family.

Its function is as follows. Binds directly to 16S ribosomal RNA. In Phytoplasma australiense, this protein is Small ribosomal subunit protein bS20.